A 331-amino-acid polypeptide reads, in one-letter code: CRISPR-associated endonuclease Cas1 1 (331 aa).

Mn(2+)-binding residues include E161, H226, and E241.

This sequence belongs to the CRISPR-associated endonuclease Cas1 family. In terms of assembly, homodimer, forms a heterotetramer with a Cas2 homodimer. Mg(2+) is required as a cofactor. It depends on Mn(2+) as a cofactor.

Functionally, CRISPR (clustered regularly interspaced short palindromic repeat), is an adaptive immune system that provides protection against mobile genetic elements (viruses, transposable elements and conjugative plasmids). CRISPR clusters contain spacers, sequences complementary to antecedent mobile elements, and target invading nucleic acids. CRISPR clusters are transcribed and processed into CRISPR RNA (crRNA). Acts as a dsDNA endonuclease. Involved in the integration of spacer DNA into the CRISPR cassette. This chain is CRISPR-associated endonuclease Cas1 1, found in Methanospirillum hungatei JF-1 (strain ATCC 27890 / DSM 864 / NBRC 100397 / JF-1).